The sequence spans 722 residues: Probable carboxypeptidase X1 (722 aa).

An N-terminal signal peptide occupies residues 1 to 20 (MWGLLLAVTAFAPSVGLGLG). The disordered stretch occupies residues 30 to 54 (APGSTLAPHSSVAQPSTKANETSER). A compositionally biased stretch (polar residues) spans 36-49 (APHSSVAQPSTKAN). 4 N-linked (GlcNAc...) asparagine glycosylation sites follow: asparagine 49, asparagine 200, asparagine 210, and asparagine 307. An F5/8 type C domain is found at 103 to 263 (PGCPPLGLES…PCLRAEILAC (161 aa)). The cysteines at positions 105 and 263 are disulfide-linked. Positions 287–610 (RHHNYKAMRK…DALLTYLEQV (324 aa)) constitute a Peptidase M14 domain. The Zn(2+) site is built by histidine 349 and glutamate 352. Asparagine 461 carries N-linked (GlcNAc...) asparagine glycosylation. Residue histidine 487 participates in Zn(2+) binding. Glutamate 580 serves as the catalytic Proton donor/acceptor.

Belongs to the peptidase M14 family. Zn(2+) is required as a cofactor. As to expression, strongly expressed in testis and spleen. Moderately expressed in salivary gland, brain, heart, lung, and kidney. Extremely low expression in liver and muscle. No expression in eye, adrenal, and white adipose tissues.

It is found in the secreted. Functionally, may be involved in cell-cell interactions. No carboxypeptidase activity was found yet. The sequence is that of Probable carboxypeptidase X1 (Cpxm1) from Mus musculus (Mouse).